A 231-amino-acid chain; its full sequence is Ribosyldihydronicotinamide dehydrogenase [quinone] (231 aa).

FAD is bound by residues His-12 and 18–21; that span reads FNGS. A Phosphoserine modification is found at Ser-80. 104–107 provides a ligand contact to FAD; it reads LYWF. 127–129 contributes to the substrate binding site; that stretch reads FDI. FAD-binding positions include 148–151 and Tyr-156; that span reads TTGG. Residues His-174 and His-178 each contribute to the Zn(2+) site. Glu-194 lines the FAD pocket. Position 197 is a phosphoserine (Ser-197). Arg-201 is an FAD binding site. Residue Cys-223 participates in Zn(2+) binding.

The protein belongs to the NAD(P)H dehydrogenase (quinone) family. In terms of assembly, homodimer. Zn(2+) is required as a cofactor. It depends on FAD as a cofactor.

The protein localises to the cytoplasm. The enzyme catalyses 1-(beta-D-ribofuranosyl)-1,4-dihydronicotinamide + a quinone + H(+) = beta-nicotinamide D-riboside + a quinol. Its function is as follows. The enzyme apparently serves as a quinone reductase in connection with conjugation reactions of hydroquinones involved in detoxification pathways as well as in biosynthetic processes such as the vitamin K-dependent gamma-carboxylation of glutamate residues in prothrombin synthesis. This chain is Ribosyldihydronicotinamide dehydrogenase [quinone] (NQO2), found in Pongo abelii (Sumatran orangutan).